We begin with the raw amino-acid sequence, 58 residues long: RRRRRRGKGRGKKRKGKGKKRGKGRRRGSKGRKKKKGKGKKRKRRRRRRRKGSKGKGK.

Positions 1–58 (RRRRRRGKGRGKKRKGKGKKRGKGRRRGSKGRKKKKGKGKKRKRRRRRRRKGSKGKGK) are disordered.

As to expression, gonads.

It is found in the nucleus. The protein localises to the chromosome. In terms of biological role, protamines substitute for histones in the chromatin of sperm during the haploid phase of spermatogenesis. They compact sperm DNA into a highly condensed, stable and inactive complex. This Bolinus brandaris (Purple dye murex) protein is Sperm protamine P2.